We begin with the raw amino-acid sequence, 1001 residues long: Open rectifier potassium channel protein 1 (1001 aa).

Over 1-6 (MSPNRW) the chain is Cytoplasmic. A helical transmembrane segment spans residues 7–27 (ILLLIFYISYLMFGAAIYYHI). N-linked (GlcNAc...) asparagine glycosylation occurs at Asn-58. An intramembrane region (pore-forming) is located at residues 95–111 (AFFFAFTVCSTVGYGNI). Residues 120 to 140 (MIMIAYSVIGIPVNGILFAGL) form a helical membrane-spanning segment. Topologically, residues 141 to 170 (GEYFGRTFEAIYRRYKKYKMSTDMHYVPPQ) are cytoplasmic. Residues 171–191 (LGLITTVVIALIPGIALFLLL) traverse the membrane as a helical segment. Positions 208-224 (LYYSYVTTTTIGFGDYV) form an intramembrane region, pore-forming. The chain crosses the membrane as a helical span at residues 244–264 (IFVIVWFIFSLGYLVMIMTFI). At 265-1001 (TRGLQSKKLA…TGSSGAPAEK (737 aa)) the chain is on the cytoplasmic side. Phosphoserine occurs at positions 332, 373, 562, and 565. The interval 591–668 (SQSYLRNGRG…QAPSARRGSM (78 aa)) is disordered. Ser-685, Ser-691, and Ser-715 each carry phosphoserine. 2 disordered regions span residues 768–795 (GGAAGGGGISRGSRKQRKMGNAGLEPPQ) and 830–1001 (SPTG…PAEK). Residues 832 to 841 (TGGAATAPAA) are compositionally biased toward low complexity. The span at 855–873 (AANQSQITAGPSNAPTVQS) shows a compositional bias: polar residues. The segment covering 911–926 (RRLSLRPSPLARELSP) has biased composition (low complexity). A compositionally biased stretch (polar residues) spans 961-983 (RPSTSSTHSPLSRIVQISQAQRK). The span at 984-1001 (SSMPSAAATGSSGAPAEK) shows a compositional bias: low complexity.

Belongs to the two pore domain potassium channel (TC 1.A.1.8) family. In terms of tissue distribution, widespread expression in adult, strongest expression in muscle, brain and ovary. Also present at low levels in larva and embryo.

It localises to the membrane. In terms of biological role, background potassium channel. Rectification is dependent on external potassium concentration. Acts as an outwardly rectifying channel but as external potassium levels increase, this is reversed. The sequence is that of Open rectifier potassium channel protein 1 (Ork1) from Drosophila melanogaster (Fruit fly).